Consider the following 717-residue polypeptide: DNA ligase (717 aa).

NAD(+) is bound by residues 44–48, 93–94, and E127; these read DADYD and SL. K129 (N6-AMP-lysine intermediate) is an active-site residue. NAD(+) contacts are provided by R150, E186, K302, and K326. Positions 431, 434, 455, and 461 each coordinate Zn(2+). The BRCT domain occupies 639–717; it reads STDSPVAGKT…EDEWLALIGG (79 aa).

It belongs to the NAD-dependent DNA ligase family. LigA subfamily. Requires Mg(2+) as cofactor. It depends on Mn(2+) as a cofactor.

It carries out the reaction NAD(+) + (deoxyribonucleotide)n-3'-hydroxyl + 5'-phospho-(deoxyribonucleotide)m = (deoxyribonucleotide)n+m + AMP + beta-nicotinamide D-nucleotide.. DNA ligase that catalyzes the formation of phosphodiester linkages between 5'-phosphoryl and 3'-hydroxyl groups in double-stranded DNA using NAD as a coenzyme and as the energy source for the reaction. It is essential for DNA replication and repair of damaged DNA. This is DNA ligase from Sinorhizobium fredii (strain NBRC 101917 / NGR234).